Here is a 507-residue protein sequence, read N- to C-terminus: MEKILVIDYGSQYTQLLAKRIRDLGVFSEVIQYDDNISLSNVKGIILSGGPDSVYNIDAPDISDEILNAELPILGICYGMQLIAKKLGGKVEQRGIAEYGKTKINITDQSLLFKKIPSTFNVWMSHKDMVTKVPEKFKITSLTSNNIISSFENESENIYCIQFHPEVRHTEFGIDILKNFIQGICGLKGSWTLMDFVENKIKEIKDTIGDKKAIIALSGGVDSSVAAVLTHRAIGNNLKAIFVNHGFLRMNEVEEVESTFRDYMGLNLTTVDAQERFLSKLKGVTDPEQKRKIIGEEFIRVFEQEAKKEEGCEYLIQGTIYSDVIESAKSGKKTFKIKSHHNVGGLPEDIDLKIVEPLKELFKDEVRSVGEILGLPREILYRHPFPGPGLAIRIMGEINDEKLTILKKVDNIFINTLKETGWYDKVWQAFAVLIPVKTVGITGDKRSYGYVAALRSVDSVEGMTADWSKVPFEILDLVSSRITNEVEEITRVVYDISSKPPATIEWE.

The 188-residue stretch at 3–190 (KILVIDYGSQ…IQGICGLKGS (188 aa)) folds into the Glutamine amidotransferase type-1 domain. Catalysis depends on Cys77, which acts as the Nucleophile. Active-site residues include His164 and Glu166. In terms of domain architecture, GMPS ATP-PPase spans 191 to 382 (WTLMDFVENK…LGLPREILYR (192 aa)). 218–224 (SGGVDSS) is a binding site for ATP.

Homodimer.

The catalysed reaction is XMP + L-glutamine + ATP + H2O = GMP + L-glutamate + AMP + diphosphate + 2 H(+). It functions in the pathway purine metabolism; GMP biosynthesis; GMP from XMP (L-Gln route): step 1/1. Catalyzes the synthesis of GMP from XMP. This chain is GMP synthase [glutamine-hydrolyzing], found in Petrotoga mobilis (strain DSM 10674 / SJ95).